The primary structure comprises 223 residues: Protein DEHYDRATION-INDUCED 19 homolog 3 (223 aa).

At T114 the chain carries Phosphothreonine. Position 116 is a phosphoserine (S116).

Belongs to the Di19 family. Post-translationally, phosphorylated in vitro by CPK3 or CPK11. As to expression, expressed in seedlings, roots, leaves, stems, flowers and siliques.

The protein resides in the nucleus. This Arabidopsis thaliana (Mouse-ear cress) protein is Protein DEHYDRATION-INDUCED 19 homolog 3 (DI19-3).